The following is a 645-amino-acid chain: 1-deoxy-D-xylulose-5-phosphate synthase 2 (645 aa).

Thiamine diphosphate contacts are provided by residues H79 and G120–S122. D151 is a Mg(2+) binding site. Thiamine diphosphate-binding positions include G152–S153, N180, Y291, and E373. Residue N180 participates in Mg(2+) binding.

This sequence belongs to the transketolase family. DXPS subfamily. Homodimer. Mg(2+) serves as cofactor. It depends on thiamine diphosphate as a cofactor.

It carries out the reaction D-glyceraldehyde 3-phosphate + pyruvate + H(+) = 1-deoxy-D-xylulose 5-phosphate + CO2. It participates in metabolic intermediate biosynthesis; 1-deoxy-D-xylulose 5-phosphate biosynthesis; 1-deoxy-D-xylulose 5-phosphate from D-glyceraldehyde 3-phosphate and pyruvate: step 1/1. Catalyzes the acyloin condensation reaction between C atoms 2 and 3 of pyruvate and glyceraldehyde 3-phosphate to yield 1-deoxy-D-xylulose-5-phosphate (DXP). This chain is 1-deoxy-D-xylulose-5-phosphate synthase 2, found in Rhodospirillum rubrum (strain ATCC 11170 / ATH 1.1.1 / DSM 467 / LMG 4362 / NCIMB 8255 / S1).